The primary structure comprises 175 residues: ATP-dependent protease subunit HslV (175 aa).

T2 is a catalytic residue. G158, C161, and T164 together coordinate Na(+).

This sequence belongs to the peptidase T1B family. HslV subfamily. In terms of assembly, a double ring-shaped homohexamer of HslV is capped on each side by a ring-shaped HslU homohexamer. The assembly of the HslU/HslV complex is dependent on binding of ATP.

It is found in the cytoplasm. The catalysed reaction is ATP-dependent cleavage of peptide bonds with broad specificity.. Allosterically activated by HslU binding. Functionally, protease subunit of a proteasome-like degradation complex believed to be a general protein degrading machinery. This Haemophilus influenzae (strain PittEE) protein is ATP-dependent protease subunit HslV.